The sequence spans 478 residues: ATP-dependent DNA helicase RecQ (478 aa).

The Helicase ATP-binding domain maps to 28–202; the sequence is IDCLLARRDC…VEGLNLRSPE (175 aa). 41–48 provides a ligand contact to ATP; the sequence is LPTGGGKS. The DEAH box signature appears at 142 to 145; it reads DEAH. The 152-residue stretch at 229 to 380 folds into the Helicase C-terminal domain; that stretch reads QLRRFLLKHL…RAEVLSQQIP (152 aa). Positions 447, 467, 470, and 473 each coordinate Zn(2+).

The protein belongs to the helicase family. RecQ subfamily. It depends on Mg(2+) as a cofactor. Zn(2+) serves as cofactor.

The enzyme catalyses Couples ATP hydrolysis with the unwinding of duplex DNA by translocating in the 3'-5' direction.. The catalysed reaction is ATP + H2O = ADP + phosphate + H(+). An ATP-dependent DNA helicase which unwinds DNA in a 3'-5' direction. The chain is ATP-dependent DNA helicase RecQ from Synechocystis sp. (strain ATCC 27184 / PCC 6803 / Kazusa).